The chain runs to 150 residues: uncharacterized protein (150 aa).

Residues 4–149 (IQIRNYQPGD…TNFYMRYKPQ (146 aa)) form the N-acetyltransferase domain.

This sequence belongs to the acetyltransferase family.

This is an uncharacterized protein from Escherichia coli (strain K12).